A 640-amino-acid chain; its full sequence is MLNKMTLHPQQIMIGPRFNRALFDPLLVVLLALQLLVVAGLVRAQTCPSVCSCSNQFSKVICVRKNLREVPDGISTNTRLLNLHENQIQIIKVNSFKHLRHLEILQLSRNHIRTIEIGAFNGLANLNTLELFDNRLTTIPNGAFVYLSKLKELWLRNNPIESIPSYAFNRIPSLRRLDLGELKRLSYISEGAFEGLSNLRYLNLAMCNLREIPNLTPLIKLDELDLSGNHLSAIRPGSFQGLMHLQKLWMIQSQIQVIERNAFDNLQSLVEINLAHNNLTLLPHDLFTPLHHLERIHLHHNPWNCNCDILWLSWWIKDMAPSNTACCARCNTPPNLKGRYIGELDQNYFTCYAPVIVEPPADLNVTEGMAAELKCRASTSLTSVSWITPNGTVMTHGAYKVRIAVLSDGTLNFTNVTVQDTGMYTCMVSNSVGNTTASATLNVTAATTTPFSYFSTVTVETMEPSQDEARTTDNNVGPTPVVDWETTNVTTSLTPQSTRSTEKTFTIPVTDINSGIPGIDEVMKTTKIIIGCFVAITLMAAVMLVIFYKMRKQHHRQNHHAPTRTVEIINVDDEITGDTPMESHLPMPAIEHEHLNHYNSYKSPFNHTTTVNTINSIHSSVHEPLLIRMNSKDNVQETQI.

The N-terminal stretch at 1–44 (MLNKMTLHPQQIMIGPRFNRALFDPLLVVLLALQLLVVAGLVRA) is a signal peptide. The LRRNT domain occupies 45–76 (QTCPSVCSCSNQFSKVICVRKNLREVPDGIST). 9 LRR repeats span residues 77 to 98 (NTRL…SFKH), 101 to 122 (HLEI…AFNG), 125 to 146 (NLNT…AFVY), 149 to 170 (KLKE…AFNR), 173 to 195 (SLRR…AFEG), 198 to 219 (NLRY…TPLI), 220 to 241 (KLDE…SFQG), 244 to 265 (HLQK…AFDN), and 268 to 289 (SLVE…LFTP). An LRRCT domain is found at 301–353 (NPWNCNCDILWLSWWIKDMAPSNTACCARCNTPPNLKGRYIGELDQNYFTCYA). An Ig-like C2-type domain is found at 354 to 442 (PVIVEPPADL…GNTTASATLN (89 aa)). Cysteine 375 and cysteine 426 are joined by a disulfide. The disordered stretch occupies residues 463–483 (EPSQDEARTTDNNVGPTPVVD). A helical transmembrane segment spans residues 528-548 (IIIGCFVAITLMAAVMLVIFY). Phosphoserine is present on serine 631.

Interacts with NTNG1 and WHRN. As to expression, highly expressed in the cerebral cortex, including frontal, parietal and occipital lobes. Putamen, amygdala, hippocampus and medulla oblongata show moderate expression. Caudate nucleus and thalamus express small amounts, whereas other brain regions show very weak or no expression.

The protein localises to the postsynaptic cell membrane. In terms of biological role, may promote neurite outgrowth of developing thalamic neurons. This is Leucine-rich repeat-containing protein 4C (LRRC4C) from Homo sapiens (Human).